Here is a 266-residue protein sequence, read N- to C-terminus: Signal peptidase I (266 aa).

Over 1-20 the chain is Cytoplasmic; the sequence is MQTDNTKSNTNKTAKQEWGS. The chain crosses the membrane as a helical span at residues 21–41; it reads FAFVICIALLIRILIMEPFTV. The Periplasmic segment spans residues 42-266; sequence PTGSMKATIL…IFRNLYSTDE (225 aa). Residues Ser45 and Lys108 contribute to the active site.

The protein belongs to the peptidase S26 family.

It localises to the cell inner membrane. It catalyses the reaction Cleavage of hydrophobic, N-terminal signal or leader sequences from secreted and periplasmic proteins.. The polypeptide is Signal peptidase I (lepB) (Rickettsia felis (strain ATCC VR-1525 / URRWXCal2) (Rickettsia azadi)).